Here is a 547-residue protein sequence, read N- to C-terminus: T-complex protein 1 subunit alpha (547 aa).

This sequence belongs to the TCP-1 chaperonin family. Heterooligomeric complex of about 850 to 900 kDa that forms two stacked rings, 12 to 16 nm in diameter.

It localises to the cytoplasm. Functionally, molecular chaperone; assists the folding of proteins upon ATP hydrolysis. Known to play a role, in vitro, in the folding of actin and tubulin. The sequence is that of T-complex protein 1 subunit alpha from Tetrahymena pyriformis.